We begin with the raw amino-acid sequence, 122 residues long: Large ribosomal subunit protein uL14 (122 aa).

The protein belongs to the universal ribosomal protein uL14 family. As to quaternary structure, part of the 50S ribosomal subunit. Forms a cluster with proteins L3 and L19. In the 70S ribosome, L14 and L19 interact and together make contacts with the 16S rRNA in bridges B5 and B8.

Its function is as follows. Binds to 23S rRNA. Forms part of two intersubunit bridges in the 70S ribosome. The sequence is that of Large ribosomal subunit protein uL14 from Petrotoga mobilis (strain DSM 10674 / SJ95).